We begin with the raw amino-acid sequence, 1074 residues long: Formin-G (1074 aa).

In terms of domain architecture, GBD/FH3 spans 34–423 (LQMQQGSKTY…DKINEFEKKI (390 aa)). Disordered regions lie at residues 476–507 (QSIS…DIQS) and 549–639 (FTPT…NPSS). A compositionally biased stretch (low complexity) spans 481-503 (SQDSSNNQKASSSSSNTSTLNDS). A coiled-coil region spans residues 502-530 (DSDIQSIQSSLKEATLEIERLKLAIEEKM). Positions 549–561 (FTPTSPDISNDGQ) are enriched in polar residues. A compositionally biased stretch (pro residues) spans 568–610 (APPPSPSPPPPISGGGAPPPPPPPPPPPSGGGAPPPPPPPPPS). The 27-residue stretch at 597 to 623 (GGGAPPPPPPPPPSGGKKAGAPGAPPT) folds into the FH1 domain. The FH2 domain occupies 631-1031 (NKPVINPSSK…ASGDNGAVQN (401 aa)). Positions 914 to 971 (DINDLEKQFNISKNNCKKVLEANIPSSSKFQSTIGSFLEKTEIDIKNLKENQKNIVDS) form a coiled coil. In terms of domain architecture, DAD spans 1037–1073 (GADPLAALANAIKLGQTGLRKRPGPENSSGGSQLNLN). The disordered stretch occupies residues 1053 to 1074 (TGLRKRPGPENSSGGSQLNLNK). The segment covering 1062–1074 (ENSSGGSQLNLNK) has biased composition (polar residues).

It belongs to the formin homology family. Diaphanous subfamily. In terms of assembly, interacts (via GBD/FH3 domain) with activated Rho-GTPases.

Formins play an important role in the nucleation of actin and the formation of linear actin filaments. In Dictyostelium discoideum (Social amoeba), this protein is Formin-G (forG).